The sequence spans 27 residues: Trichocyst matrix protein T4-C (27 aa).

It belongs to the TMP family.

The protein resides in the trichocyst. Structural protein that crystallize inside the trichocyst matrix. This chain is Trichocyst matrix protein T4-C (T4C), found in Paramecium tetraurelia.